A 48-amino-acid chain; its full sequence is 2-deoxy-glucose resistant protein 1, mitochondrial (48 aa).

Residues 1 to 28 (MQVGFVSQTNCRSFPACIVFLFQMSQRQ) constitute a mitochondrion transit peptide.

It localises to the mitochondrion. The sequence is that of 2-deoxy-glucose resistant protein 1, mitochondrial (DGR1) from Saccharomyces cerevisiae (strain ATCC 204508 / S288c) (Baker's yeast).